We begin with the raw amino-acid sequence, 209 residues long: MAIKVLFVDDHEMVRIGISSYLSTQEDIEVVGEGASGKDAITKAHELKPDLILMDLLMDDMDGVEATTEIKKDLPQIKVVMLTSFIEDKEVYRALDSGVDSYILKTTSASDIADAVRKTYEGESVFEPEVLVKMRNRMKKRAELYEMLTEREMEILLLIAKGYSNQEIASASHITIKTVKTHVSNILSKLEVQDRTQAVIYAFQHNLIQ.

One can recognise a Response regulatory domain in the interval 4–120 (KVLFVDDHEM…DIADAVRKTY (117 aa)). Residue aspartate 55 is modified to 4-aspartylphosphate. The HTH luxR-type domain maps to 141–206 (RAELYEMLTE…QAVIYAFQHN (66 aa)). Positions 165–184 (NQEIASASHITIKTVKTHVS) form a DNA-binding region, H-T-H motif.

Post-translationally, phosphorylated by VraS.

It is found in the cytoplasm. In terms of biological role, member of the two-component regulatory system VraS/VraR involved in the control of the cell wall peptidoglycan biosynthesis. The polypeptide is Response regulator protein VraR (vraR) (Staphylococcus epidermidis (strain ATCC 35984 / DSM 28319 / BCRC 17069 / CCUG 31568 / BM 3577 / RP62A)).